The primary structure comprises 367 residues: DNA replication and repair protein RecF (367 aa).

An ATP-binding site is contributed by 30–37; that stretch reads GENAQGKT.

The protein belongs to the RecF family.

It localises to the cytoplasm. Its function is as follows. The RecF protein is involved in DNA metabolism; it is required for DNA replication and normal SOS inducibility. RecF binds preferentially to single-stranded, linear DNA. It also seems to bind ATP. This Chlamydia abortus (strain DSM 27085 / S26/3) (Chlamydophila abortus) protein is DNA replication and repair protein RecF.